The sequence spans 302 residues: 4-diphosphocytidyl-2-C-methyl-D-erythritol kinase (302 aa).

K32 is a catalytic residue. 115-125 (PMGGGVGGGSS) provides a ligand contact to ATP. The active site involves D157.

Belongs to the GHMP kinase family. IspE subfamily.

The enzyme catalyses 4-CDP-2-C-methyl-D-erythritol + ATP = 4-CDP-2-C-methyl-D-erythritol 2-phosphate + ADP + H(+). The protein operates within isoprenoid biosynthesis; isopentenyl diphosphate biosynthesis via DXP pathway; isopentenyl diphosphate from 1-deoxy-D-xylulose 5-phosphate: step 3/6. Functionally, catalyzes the phosphorylation of the position 2 hydroxy group of 4-diphosphocytidyl-2C-methyl-D-erythritol. In Actinobacillus succinogenes (strain ATCC 55618 / DSM 22257 / CCUG 43843 / 130Z), this protein is 4-diphosphocytidyl-2-C-methyl-D-erythritol kinase.